Reading from the N-terminus, the 1427-residue chain is A disintegrin and metalloproteinase with thrombospondin motifs 13 (1427 aa).

A signal peptide spans 1-29; sequence MHQRHPRARCPPLCVAGILACGFLLGCWG. Positions 30–74 are excised as a propeptide; that stretch reads PSHFQQSCLQALEPQAVSSYLSPGAPLKGRPPSPGFQRQRQRQRR. The segment at 51-70 is disordered; it reads SPGAPLKGRPPSPGFQRQRQ. Residues 80 to 286 enclose the Peptidase M12B domain; it reads LHLELLVAVG…GRARCVWDPP (207 aa). Residue glutamate 83 coordinates Ca(2+). Asparagine 142 and asparagine 146 each carry an N-linked (GlcNAc...) asparagine glycan. 3 cysteine pairs are disulfide-bonded: cysteine 155–cysteine 208, cysteine 202–cysteine 281, and cysteine 242–cysteine 265. The Ca(2+) site is built by aspartate 173, aspartate 182, glutamate 184, aspartate 187, and glutamate 212. Residue histidine 224 participates in Zn(2+) binding. Residue glutamate 225 is part of the active site. Zn(2+) is bound by residues histidine 228 and histidine 234. Positions 281 and 284 each coordinate Ca(2+). The region spanning 287–383 is the Disintegrin domain; that stretch reads RPQPGSAGHP…LVELTPIAAV (97 aa). 4 disulfides stabilise this stretch: cysteine 311/cysteine 337, cysteine 322/cysteine 347, cysteine 332/cysteine 366, and cysteine 360/cysteine 371. The TSP type-1 1 domain occupies 384-439; it reads HGRWSSWGPRSPCSRSCGGGVVTRRRQCNNPRPAFGGRACVGADLQAEMCNTQACE. Tryptophan 387 carries a C-linked (Man) tryptophan glycan. 8 cysteine pairs are disulfide-bonded: cysteine 396–cysteine 433, cysteine 400–cysteine 438, cysteine 411–cysteine 423, cysteine 450–cysteine 487, cysteine 483–cysteine 522, cysteine 508–cysteine 527, cysteine 532–cysteine 548, and cysteine 545–cysteine 555. Serine 399 carries an O-linked (Fuc...) serine glycan. Positions 440 to 556 are cysteine-rich; it reads KTQLEFMSQQ…VCGGDNSTCS (117 aa). Positions 498–500 match the Cell attachment site motif; sequence RGD. Asparagine 552, asparagine 579, and asparagine 614 each carry an N-linked (GlcNAc...) asparagine glycan. Residues 556–685 are spacer; the sequence is SPRKGSFTAG…TYFQPKPRQA (130 aa). The N-linked (GlcNAc...) (complex) asparagine glycan is linked to asparagine 667. TSP type-1 domains are found at residues 682–730, 742–805, 808–859, 896–950, 951–1011, 1012–1068, and 1072–1131; these read PRQA…SQQP, CPPY…QPCP, WEVS…PEPC, VWTP…QAVP, CPAR…SLEP, CPPR…VPCL, and CTYR…GPCV. An O-linked (Fuc...) serine glycan is attached at serine 698. Asparagine 707 is a glycosylation site (N-linked (GlcNAc...) (complex) asparagine). O-linked (Fuc...) serine glycosylation occurs at serine 757. A glycan (N-linked (GlcNAc...) asparagine) is linked at asparagine 828. Residues serine 907, serine 965, serine 1027, and serine 1087 are each glycosylated (O-linked (Fuc...) serine). 2 consecutive CUB domains span residues 1192-1298 and 1299-1427; these read CGRQ…FYRE and CDMQ…KEGT. 2 N-linked (GlcNAc...) asparagine glycosylation sites follow: asparagine 1235 and asparagine 1354.

It depends on Zn(2+) as a cofactor. Ca(2+) is required as a cofactor. Post-translationally, glycosylated. O-fucosylated by POFUT2 on a serine or a threonine residue found within the consensus sequence C1-X(2)-(S/T)-C2-G of the TSP type-1 repeat domains where C1 and C2 are the first and second cysteine residue of the repeat, respectively. Fucosylated repeats can then be further glycosylated by the addition of a beta-1,3-glucose residue by the glucosyltransferase, B3GALTL. Fucosylation mediates the efficient secretion of ADAMTS13. May also be C-glycosylated on tryptophan residues within the consensus sequence W-X-X-W of the TPRs, and also N-glycosylated. These other glycosylations can also facilitate secretion. In terms of processing, the precursor is processed by a furin endopeptidase which cleaves off the pro-domain. In terms of tissue distribution, plasma. Expressed primarily in liver.

The protein resides in the secreted. It carries out the reaction The enzyme cleaves the von Willebrand factor at bond 842-Tyr-|-Met-843 within the A2 domain.. Zinc and calcium ions cooperatively modulate enzyme activity. The cleavage of the pro-domain is not required for protease activity. Dependence on calcium for proteolytic activity is mediated by the high affinity site. In terms of biological role, cleaves the vWF multimers in plasma into smaller forms thereby controlling vWF-mediated platelet thrombus formation. This chain is A disintegrin and metalloproteinase with thrombospondin motifs 13 (ADAMTS13), found in Homo sapiens (Human).